The sequence spans 562 residues: Potassium-transporting ATPase potassium-binding subunit (562 aa).

The next 12 membrane-spanning stretches (helical) occupy residues 5 to 25 (AFLL…PLGS), 63 to 83 (AAAI…LLMA), 132 to 152 (GLTV…FALI), 175 to 195 (LYVL…QGVL), 250 to 270 (LSNI…CFAF), 279 to 299 (QGHA…AVVM), 327 to 347 (FGVL…TGAV), 356 to 376 (ALGG…FGGV), 379 to 399 (GLYG…LMIG), 416 to 436 (MTAL…ALAL), 483 to 503 (VLLA…VLAI), and 526 to 546 (LFIG…FIPA).

The protein belongs to the KdpA family. In terms of assembly, the system is composed of three essential subunits: KdpA, KdpB and KdpC.

The protein resides in the cell inner membrane. Functionally, part of the high-affinity ATP-driven potassium transport (or Kdp) system, which catalyzes the hydrolysis of ATP coupled with the electrogenic transport of potassium into the cytoplasm. This subunit binds the periplasmic potassium ions and delivers the ions to the membrane domain of KdpB through an intramembrane tunnel. This Pectobacterium carotovorum subsp. carotovorum (strain PC1) protein is Potassium-transporting ATPase potassium-binding subunit.